A 426-amino-acid chain; its full sequence is Egl nine homolog 1 (426 aa).

Residue A2 is modified to N-acetylalanine. The tract at residues 6 to 20 (GGPGGPSPSERDRQY) is required for nuclear export. Phosphoserine is present on S12. The Zn(2+) site is built by C21, C24, C33, C36, C42, H46, H54, and C58. The MYND-type; atypical zinc-finger motif lies at 21–58 (CELCGKMENLLRCSRCRSSFYCCKEHQRQDWKKHKLVC). Disordered regions lie at residues 65-129 (LGHG…PCRA) and 160-184 (ANLYPPSNTPGDALSPGGGLRPNGQ). Pro residues predominate over residues 77 to 87 (PAPPAAVPPPR). Basic and acidic residues predominate over residues 89–103 (GAREPRKAAARRDNA). The segment covering 120–129 (PAAAASPCRA) has biased composition (low complexity). Phosphoserine is present on S125. 2 positions are modified to S-nitrosocysteine: C201 and C208. Residues 241–251 (VSQKSDSSKDI) are beta(2)beta(3) 'finger-like' loop. Residues 291–392 (KINGRTKAMV…RYAITVWYFD (102 aa)) form the Fe2OG dioxygenase domain. C302 carries the post-translational modification S-nitrosocysteine. H313 and D315 together coordinate Fe cation. S-nitrosocysteine is present on residues C323 and C326. A Fe cation-binding site is contributed by H374. A 2-oxoglutarate-binding site is contributed by R383.

In terms of assembly, monomer. Interacts with ING4; the interaction inhibits the hydroxylation of HIF alpha proteins. Interacts with PTGES3 (via PXLE motif); thereby recruiting EGLN1 to the HSP90 pathway to facilitate HIF alpha proteins hydroxylation. Interacts with LIMD1. Found in a complex composed of LIMD1, VHL, EGLN1/PHD2, ELOB and CUL2. Interacts with EPAS1. Interacts with CBFA2T3. Interacts with HIF1A. The cofactor is Fe(2+). It depends on L-ascorbate as a cofactor. In terms of processing, S-nitrosylation inhibits the enzyme activity up to 60% under aerobic conditions. Chelation of Fe(2+) has no effect on the S-nitrosylation. It is uncertain whether nitrosylation occurs on Cys-323 or Cys-326. In terms of tissue distribution, according to PubMed:11056053, widely expressed with highest levels in skeletal muscle and heart, moderate levels in pancreas, brain (dopaminergic neurons of adult and fetal substantia nigra) and kidney, and lower levels in lung and liver. According to PubMed:12351678 widely expressed with highest levels in brain, kidney and adrenal gland. Expressed in cardiac myocytes, aortic endothelial cells and coronary artery smooth muscle. According to PubMed:12788921; expressed in adult and fetal heart, brain, liver, lung, skeletal muscle and kidney. Also expressed in placenta. Highest levels in adult heart, brain, lung and liver and fetal brain, heart spleen and skeletal muscle.

It is found in the cytoplasm. Its subcellular location is the nucleus. The catalysed reaction is L-prolyl-[hypoxia-inducible factor alpha subunit] + 2-oxoglutarate + O2 = trans-4-hydroxy-L-prolyl-[hypoxia-inducible factor alpha subunit] + succinate + CO2. With respect to regulation, following exposure to hypoxia, activated in HeLa cells but not in cardiovascular cells. Functionally, cellular oxygen sensor that catalyzes, under normoxic conditions, the post-translational formation of 4-hydroxyproline in hypoxia-inducible factor (HIF) alpha proteins. Hydroxylates a specific proline found in each of the oxygen-dependent degradation (ODD) domains (N-terminal, NODD, and C-terminal, CODD) of HIF1A. Also hydroxylates HIF2A. Has a preference for the CODD site for both HIF1A and HIF1B. Hydroxylated HIFs are then targeted for proteasomal degradation via the von Hippel-Lindau ubiquitination complex. Under hypoxic conditions, the hydroxylation reaction is attenuated allowing HIFs to escape degradation resulting in their translocation to the nucleus, heterodimerization with HIF1B, and increased expression of hypoxy-inducible genes. EGLN1 is the most important isozyme under normoxia and, through regulating the stability of HIF1, involved in various hypoxia-influenced processes such as angiogenesis in retinal and cardiac functionality. Target proteins are preferentially recognized via a LXXLAP motif. In Homo sapiens (Human), this protein is Egl nine homolog 1.